Consider the following 424-residue polypeptide: Putative chloroquine resistance transporter (424 aa).

At 1–56 (MTVIKKGKNKKKNLKNDDRYKELDSLITNGSEIGDNSGRSCIKRFFKIIGNEMKNN) the chain is on the cytoplasmic side. The chain crosses the membrane as a helical span at residues 57–77 (VYVYFLSILYLCVCVMNKVFA). Residues 78–88 (KRTLNKMGNYS) are Vacuolar-facing. Asn-86 carries N-linked (GlcNAc...) asparagine glycosylation. A helical transmembrane segment spans residues 89–109 (FVTSETHNIICIVVFQLLYFI). The Cytoplasmic portion of the chain corresponds to 110-125 (YRKTSTSGYKNESQKN). The helical transmembrane segment at 126–146 (FGWQFFLISLLDASTVIISMI) threads the bilayer. Over 147–156 (GLTRTTGNIQ) the chain is Vacuolar. The helical transmembrane segment at 157–177 (SFIMQLIIPVNMYFCFMFLGY) threads the bilayer. The Cytoplasmic portion of the chain corresponds to 178 to 180 (RYH). Residues 181–201 (LFNYLGAFIILITIAVVETFL) form a helical membrane-spanning segment. The Vacuolar portion of the chain corresponds to 202 to 209 (SFETQSEN). A helical membrane pass occupies residues 210–230 (SIIFNLIMISALIPLSFSNMT). The Cytoplasmic portion of the chain corresponds to 231-248 (REVVFKKHKINILRLNAM). The chain crosses the membrane as a helical span at residues 249–269 (VVLFQFFTSLLVLPVYNIPFL). The Vacuolar segment spans residues 270–317 (KEIYMPFSEMSTNINNGLRCLFYGQNTVVENCGVGMVKMCDNCEGAWK). Cystine bridges form between Cys-289-Cys-312 and Cys-301-Cys-309. A helical membrane pass occupies residues 318-338 (TFITFSFFNICDNLLACYIID). Residues 339–346 (KFSTMTYT) lie on the Cytoplasmic side of the membrane. A helical membrane pass occupies residues 347–367 (IVSCIQGPAITIAYYFKFLAG). Residues 368–377 (DAVRKPRILD) lie on the Vacuolar side of the membrane. The helical transmembrane segment at 378–398 (FLTLFGYLFGTIIYRIGNIIL) threads the bilayer. Over 399-424 (EKKKMVKSQNSNDSEAELTCIETSTA) the chain is Cytoplasmic.

This sequence belongs to the CRT-like transporter family.

Its subcellular location is the vacuole membrane. Nutrient transporter. Involved in maintaining the osmotic homeostasis of the digestive vacuole. In Plasmodium yoelii yoelii, this protein is Putative chloroquine resistance transporter.